A 314-amino-acid chain; its full sequence is tRNA(Ile)-lysidine synthase (314 aa).

37–42 is an ATP binding site; that stretch reads SGGPDS.

This sequence belongs to the tRNA(Ile)-lysidine synthase family.

The protein localises to the cytoplasm. It carries out the reaction cytidine(34) in tRNA(Ile2) + L-lysine + ATP = lysidine(34) in tRNA(Ile2) + AMP + diphosphate + H(+). Its function is as follows. Ligates lysine onto the cytidine present at position 34 of the AUA codon-specific tRNA(Ile) that contains the anticodon CAU, in an ATP-dependent manner. Cytidine is converted to lysidine, thus changing the amino acid specificity of the tRNA from methionine to isoleucine. This chain is tRNA(Ile)-lysidine synthase, found in Corynebacterium glutamicum (strain ATCC 13032 / DSM 20300 / JCM 1318 / BCRC 11384 / CCUG 27702 / LMG 3730 / NBRC 12168 / NCIMB 10025 / NRRL B-2784 / 534).